Reading from the N-terminus, the 447-residue chain is Chromosomal replication initiator protein DnaA (447 aa).

The segment at 1 to 70 (MQDFWSKAMD…EEILSEQLGE (70 aa)) is domain I, interacts with DnaA modulators. The interval 70 to 110 (EPVTLLFAADPALEKPVASKTQTVTPVQSGGETGDQENFHS) is domain II. Positions 87-109 (ASKTQTVTPVQSGGETGDQENFH) are disordered. Residues 88–99 (SKTQTVTPVQSG) show a composition bias toward polar residues. The interval 111–327 (GLDPRYTFDS…GALIRVSAYA (217 aa)) is domain III, AAA+ region. The ATP site is built by glycine 155, glycine 157, lysine 158, and threonine 159. The interval 328 to 447 (SLTGKPITMA…LASLKSMLQK (120 aa)) is domain IV, binds dsDNA.

This sequence belongs to the DnaA family. In terms of assembly, oligomerizes as a right-handed, spiral filament on DNA at oriC.

It localises to the cytoplasm. Plays an essential role in the initiation and regulation of chromosomal replication. ATP-DnaA binds to the origin of replication (oriC) to initiate formation of the DNA replication initiation complex once per cell cycle. Binds the DnaA box (a 9 base pair repeat at the origin) and separates the double-stranded (ds)DNA. Forms a right-handed helical filament on oriC DNA; dsDNA binds to the exterior of the filament while single-stranded (ss)DNA is stabiized in the filament's interior. The ATP-DnaA-oriC complex binds and stabilizes one strand of the AT-rich DNA unwinding element (DUE), permitting loading of DNA polymerase. After initiation quickly degrades to an ADP-DnaA complex that is not apt for DNA replication. Binds acidic phospholipids. The polypeptide is Chromosomal replication initiator protein DnaA (Magnetococcus marinus (strain ATCC BAA-1437 / JCM 17883 / MC-1)).